A 598-amino-acid chain; its full sequence is Elongation factor 4 (598 aa).

One can recognise a tr-type G domain in the interval 4-181 (KKIRNFAIIA…AIVNLIPPPQ (178 aa)). GTP-binding positions include 16–21 (DHGKST) and 128–131 (NKID).

This sequence belongs to the TRAFAC class translation factor GTPase superfamily. Classic translation factor GTPase family. LepA subfamily.

Its subcellular location is the cell membrane. It carries out the reaction GTP + H2O = GDP + phosphate + H(+). Required for accurate and efficient protein synthesis under certain stress conditions. May act as a fidelity factor of the translation reaction, by catalyzing a one-codon backward translocation of tRNAs on improperly translocated ribosomes. Back-translocation proceeds from a post-translocation (POST) complex to a pre-translocation (PRE) complex, thus giving elongation factor G a second chance to translocate the tRNAs correctly. Binds to ribosomes in a GTP-dependent manner. This chain is Elongation factor 4, found in Mesomycoplasma hyopneumoniae (strain 7448) (Mycoplasma hyopneumoniae).